Consider the following 474-residue polypeptide: Cysteine--tRNA ligase (474 aa).

Cys30 is a binding site for Zn(2+). The 'HIGH' region motif lies at 32 to 42 (PTVYNFAHIGN). 3 residues coordinate Zn(2+): Cys212, His237, and Glu241. The 'KMSKS' region motif lies at 270–274 (KMSKS). Lys273 contributes to the ATP binding site.

This sequence belongs to the class-I aminoacyl-tRNA synthetase family. Monomer. Zn(2+) serves as cofactor.

It is found in the cytoplasm. It catalyses the reaction tRNA(Cys) + L-cysteine + ATP = L-cysteinyl-tRNA(Cys) + AMP + diphosphate. This Leptospira borgpetersenii serovar Hardjo-bovis (strain JB197) protein is Cysteine--tRNA ligase.